A 71-amino-acid chain; its full sequence is Large ribosomal subunit protein bL31 (71 aa).

Zn(2+) contacts are provided by Cys16, Cys18, Cys37, and Cys40.

Belongs to the bacterial ribosomal protein bL31 family. Type A subfamily. As to quaternary structure, part of the 50S ribosomal subunit. Zn(2+) is required as a cofactor.

Its function is as follows. Binds the 23S rRNA. This Pseudoalteromonas translucida (strain TAC 125) protein is Large ribosomal subunit protein bL31.